Consider the following 227-residue polypeptide: UPF0173 metal-dependent hydrolase Bcer98_3294 (227 aa).

Belongs to the UPF0173 family.

In Bacillus cytotoxicus (strain DSM 22905 / CIP 110041 / 391-98 / NVH 391-98), this protein is UPF0173 metal-dependent hydrolase Bcer98_3294.